Here is a 1157-residue protein sequence, read N- to C-terminus: ATP-dependent helicase/deoxyribonuclease subunit B (1157 aa).

A UvrD-like helicase ATP-binding domain is found at 1–275; sequence MTLHAYLGRA…QYFNQLYRFN (275 aa). 8 to 15 provides a ligand contact to ATP; the sequence is GRAGTGKS. The UvrD-like helicase C-terminal domain occupies 269 to 583; it reads NQLYRFNNQD…SIGTMDLAKV (315 aa). [4Fe-4S] cluster-binding residues include Cys-784, Cys-1112, Cys-1115, and Cys-1121.

The protein belongs to the helicase family. AddB/RexB type 1 subfamily. In terms of assembly, heterodimer of AddA and AddB. Mg(2+) serves as cofactor. The cofactor is [4Fe-4S] cluster.

The heterodimer acts as both an ATP-dependent DNA helicase and an ATP-dependent, dual-direction single-stranded exonuclease. Recognizes the chi site generating a DNA molecule suitable for the initiation of homologous recombination. The AddB subunit has 5' -&gt; 3' nuclease activity but not helicase activity. In Staphylococcus aureus (strain JH9), this protein is ATP-dependent helicase/deoxyribonuclease subunit B.